Consider the following 470-residue polypeptide: Glutamate--tRNA ligase 2 (470 aa).

Residues 11-21 (PSPTGHLHLGG) carry the 'HIGH' region motif. Positions 238–242 (KLSKR) match the 'KMSKS' region motif. Lys241 provides a ligand contact to ATP.

It belongs to the class-I aminoacyl-tRNA synthetase family. Glutamate--tRNA ligase type 1 subfamily. As to quaternary structure, monomer.

Its subcellular location is the cytoplasm. It carries out the reaction tRNA(Glu) + L-glutamate + ATP = L-glutamyl-tRNA(Glu) + AMP + diphosphate. Functionally, catalyzes the attachment of glutamate to tRNA(Glu) in a two-step reaction: glutamate is first activated by ATP to form Glu-AMP and then transferred to the acceptor end of tRNA(Glu). The protein is Glutamate--tRNA ligase 2 of Ehrlichia ruminantium (strain Welgevonden).